Reading from the N-terminus, the 458-residue chain is MKPPTRSQNRSDSQAASSQKDQKSNVENQTSLAPPPRPGAPTASDTPDYFNSMHNPFSLEPNPFEQSFGGNPADTPGKSLLPSVAALTSPALPGTSSASGYNWNNSLRSGPLSPAMLPGPTGPNDYFDSIGRGFPTPNESSLRTGLTPGGGGSMFPAPSPNSQALLQQLQNGGATPSTIDFHRTALAAKKNNSNAPTSNPNEQEQAAANMDVKPARPADFTQHDAADAANGLFMLAKGGQANNAPMNHAPMSNDTRAAARRVSQNTNGTSAEDASDHEPAKPAKGKGKKNTAKAPAANNRRKAEDAPKGSNKRSKSSMEMPSDMDDEDDEDDDMKQFPMDTKKMTDEEKRRNFLERNRVAALKCRQRKKQWLANLQNKVELFTSENDALTATVTQLREEIVNLKTLLLAHKDCPVSQAQGLGPLMMNGMSAGYDHHGYNMPPNMGMQPGGIPTQGMRR.

In terms of domain architecture, bZIP spans 347–410 (EEKRRNFLER…VNLKTLLLAH (64 aa)). Residues 349 to 378 (KRRNFLERNRVAALKCRQRKKQWLANLQNK) form a basic motif region. The leucine-zipper stretch occupies residues 389 to 403 (LTATVTQLREEIVNL).

This sequence belongs to the bZIP family.

It localises to the nucleus. In terms of biological role, transcription factor that positively regulates vegetative growth, reproduction, and osmotic stress response. The polypeptide is Transcription factor Atf1 (Penicillium expansum (Blue mold rot fungus)).